We begin with the raw amino-acid sequence, 747 residues long: MKLNATYIKIRDKWWGLPLFLPSLILPIFAHINTFAHISSGEVFLFYLPLALMISMMMFFSWAALPGIALGIFVRKYAELGFYETLSLTANFIIIIILCWGGYRVFTPRRNNVSHGDTRLISQRIFWQIVFPATLFLILFQFAAFVGLLASRENLVGVMPFNLGTLINYQALLVGNLIGVPLCYFIIRVVRNPFYLRSYYSQLKQQVDAKVTKKEFALWLLALGALLLLLCMPLNEKSTIFSTNYTLSLLLPLMMWGAMRYGYKLISLLWAVVLMISIHSYQNYIPIYPGYTTQLTITSSSYLVFSFIVNYMAVLATRQRAVVRRIQRLAYVDPVVHLPNVRALNRALRDAPWSALCYLRIPGMEMLVKNYGIMLRIQYKQKLSHWLSPLLEPGEDVYQLSGNDLALRLNTESHQERITALDSHLKQFRFFWDGMPMQPQIGVSYCYVRSPVNHIYLLLGELNTVAELSIVTNAPENMQRRGAMYLQRELKDKVAMMNRLQQALEHNHFFLMAQPITGMRGDVYHEILLRMKGENDELISPDSFLPVAHEFGLSSSIDMWVIEHTLQFMAENRAKMPAHRFAINLSPTSVCQARFPVEVSQLLAKYQIEAWQLIFEVTESNALTNVKQAQITLQHLQELGCQIAIDDFGTGYASYARLKNVNADLLKIDGSFIRNIVSNSLDYQIVASICHLARMKKMLVVAEYVENEEIREAVLSLGIDYMQGYLIGKPQPLIDTLNEIEPIRESA.

Residues 1 to 14 (MKLNATYIKIRDKW) lie on the Periplasmic side of the membrane. The helical transmembrane segment at 15 to 36 (WGLPLFLPSLILPIFAHINTFA) threads the bilayer. The Cytoplasmic portion of the chain corresponds to 37-42 (HISSGE). The helical transmembrane segment at 43-65 (VFLFYLPLALMISMMMFFSWAAL) threads the bilayer. The Periplasmic portion of the chain corresponds to 66-79 (PGIALGIFVRKYAE). The helical transmembrane segment at 80-102 (LGFYETLSLTANFIIIIILCWGG) threads the bilayer. The Cytoplasmic segment spans residues 103–128 (YRVFTPRRNNVSHGDTRLISQRIFWQ). A helical transmembrane segment spans residues 129–151 (IVFPATLFLILFQFAAFVGLLAS). The Periplasmic segment spans residues 152-165 (RENLVGVMPFNLGT). The chain crosses the membrane as a helical span at residues 166–188 (LINYQALLVGNLIGVPLCYFIIR). Residues 189-215 (VVRNPFYLRSYYSQLKQQVDAKVTKKE) are Cytoplasmic-facing. The helical transmembrane segment at 216–235 (FALWLLALGALLLLLCMPLN) threads the bilayer. Residues 236 to 239 (EKST) are Periplasmic-facing. The helical transmembrane segment at 240–259 (IFSTNYTLSLLLPLMMWGAM) threads the bilayer. Topologically, residues 260-265 (RYGYKL) are cytoplasmic. A helical membrane pass occupies residues 266-285 (ISLLWAVVLMISIHSYQNYI). Topologically, residues 286–294 (PIYPGYTTQ) are periplasmic. The chain crosses the membrane as a helical span at residues 295–317 (LTITSSSYLVFSFIVNYMAVLAT). Topologically, residues 318 to 747 (RQRAVVRRIQ…NEIEPIRESA (430 aa)) are cytoplasmic. Positions 493 to 744 (KVAMMNRLQQ…DTLNEIEPIR (252 aa)) constitute an EAL domain.

It depends on Mg(2+) as a cofactor. The cofactor is Mn(2+).

It localises to the cell inner membrane. It carries out the reaction 3',3'-c-di-GMP + H2O = 5'-phosphoguanylyl(3'-&gt;5')guanosine + H(+). With respect to regulation, inhibited by pGpG. Its function is as follows. Phosphodiesterase (PDE) that catalyzes the hydrolysis of cyclic-di-GMP (c-di-GMP) to 5'-pGpG. Truncated proteins consisting of the GGDEF/EAL domains (residues 319-747) or of the EAL domain alone (481-747) have c-di-GMP phosphodiesterase activity. They do not have diguanylate cyclase activity. Cyclic-di-GMP is a second messenger which controls cell surface-associated traits in bacteria. This chain is Cyclic di-GMP phosphodiesterase PdeF, found in Escherichia coli (strain K12).